Consider the following 466-residue polypeptide: Histone acetyltransferase type B catalytic subunit DDB_G0275159 (466 aa).

In terms of domain architecture, N-acetyltransferase spans 169 to 366; it reads AVFRYHEKLQ…FRIAIKKRLY (198 aa). Residues 240–242 and 247–253 each bind acetyl-CoA; these read YLI and QRMGHGK. Glutamate 279 functions as the Proton donor/acceptor in the catalytic mechanism. Residues 372 to 459 are a coiled coil; the sequence is DSEQIEKMKQ…LEENYHKTLS (88 aa).

It belongs to the HAT1 family.

It carries out the reaction L-lysyl-[protein] + acetyl-CoA = N(6)-acetyl-L-lysyl-[protein] + CoA + H(+). In Dictyostelium discoideum (Social amoeba), this protein is Histone acetyltransferase type B catalytic subunit DDB_G0275159.